We begin with the raw amino-acid sequence, 391 residues long: GTPase Obg (391 aa).

The Obg domain occupies 1 to 159 (MKFIDEALIR…RDLQLELMLL (159 aa)). An OBG-type G domain is found at 160-333 (ADVGMLGLPN…LTRDIMDFIE (174 aa)). GTP is bound by residues 166 to 173 (GLPNAGKS), 191 to 195 (FTTLV), 213 to 216 (DIPG), 283 to 286 (NKID), and 314 to 316 (SAA). Mg(2+) contacts are provided by S173 and T193. Residues 361–391 (QNPITEDDWDDLDDDGWTEEDDEGVEFIYKP) are disordered. Acidic residues predominate over residues 365 to 385 (TEDDWDDLDDDGWTEEDDEGV).

It belongs to the TRAFAC class OBG-HflX-like GTPase superfamily. OBG GTPase family. Monomer. Mg(2+) serves as cofactor.

It localises to the cytoplasm. An essential GTPase which binds GTP, GDP and possibly (p)ppGpp with moderate affinity, with high nucleotide exchange rates and a fairly low GTP hydrolysis rate. Plays a role in control of the cell cycle, stress response, ribosome biogenesis and in those bacteria that undergo differentiation, in morphogenesis control. This chain is GTPase Obg, found in Glaesserella parasuis serovar 5 (strain SH0165) (Haemophilus parasuis).